Here is a 153-residue protein sequence, read N- to C-terminus: MDSIETHAKQLGQQTPLPASPEAAQLDRVPNPHADTDYLARFTAPEFTSLCPVTGQPDFATLVIDYVPDRWLVESKSLKLYLGAFRNHGAFHEDCTVGIGRRLVALLEPRWLRIGGYWYPRGGIPIDVFWQTGEPLKSVWLPDQGVAPYRGRG.

Residues 1–30 (MDSIETHAKQLGQQTPLPASPEAAQLDRVP) form a disordered region. Cysteine 51 (thioimide intermediate) is an active-site residue. Residue aspartate 58 is the Proton donor of the active site. Substrate is bound by residues 73-75 (VES) and 92-93 (HE).

It belongs to the GTP cyclohydrolase I family. QueF type 1 subfamily.

It localises to the cytoplasm. The catalysed reaction is 7-aminomethyl-7-carbaguanine + 2 NADP(+) = 7-cyano-7-deazaguanine + 2 NADPH + 3 H(+). It functions in the pathway tRNA modification; tRNA-queuosine biosynthesis. In terms of biological role, catalyzes the NADPH-dependent reduction of 7-cyano-7-deazaguanine (preQ0) to 7-aminomethyl-7-deazaguanine (preQ1). The sequence is that of NADPH-dependent 7-cyano-7-deazaguanine reductase from Methylorubrum extorquens (strain CM4 / NCIMB 13688) (Methylobacterium extorquens).